Here is a 176-residue protein sequence, read N- to C-terminus: ATP-dependent protease subunit HslV (176 aa).

Threonine 2 is a catalytic residue. Na(+)-binding residues include glycine 157, cysteine 160, and threonine 163.

This sequence belongs to the peptidase T1B family. HslV subfamily. A double ring-shaped homohexamer of HslV is capped on each side by a ring-shaped HslU homohexamer. The assembly of the HslU/HslV complex is dependent on binding of ATP.

Its subcellular location is the cytoplasm. The enzyme catalyses ATP-dependent cleavage of peptide bonds with broad specificity.. Its activity is regulated as follows. Allosterically activated by HslU binding. In terms of biological role, protease subunit of a proteasome-like degradation complex believed to be a general protein degrading machinery. This chain is ATP-dependent protease subunit HslV, found in Escherichia coli O45:K1 (strain S88 / ExPEC).